The following is a 482-amino-acid chain: MLKLYISMFLDSTEHILKEINRLQHKEQRTNGISCIPLIPLHQAVEARNLEVVEALLERGHNVNETDHRYLTPLHIICSHPNKIGMKEVIAEKTKRDLSSYEERAISEACYNNDINIFKMLLLNDGNRTIDDVQLCTIDYDDSIDTKIIKLLLAYGADTKIKTEDKLKTALHYASTNKNYKLAEYLLIYGAEVNSPDIGNNSPMHEAVRHRNEDVVKILLQYGSNTDHMNSCGTTPLHISVGRVLNRNNYSILKILLEHGTSVNIQSSILGFTALHLSIHSEDKLNLLLEYGADPNILNFEKETPLSMAVKVTRYDINIYNRLIYNICLRAFKYPFIKTTEGYIKNMTCINGYPKCKSIKDACEYEIKNLESIKLSPRFSMADFLKDDNSLMMDKIINNDLIDYYYSFMDSFPIYGNIVKKSIDTAKDRYLLIQGAIRSMDNITFPSQRVSWYNMPLEIKHDIMYLLDDKSLCNLIVAEYDS.

ANK repeat units lie at residues 36-65, 69-100, 101-128, 129-161, 166-195, 199-228, 232-265, 270-297, and 301-332; these read IPLI…NVNE, RYLT…DLSS, YEER…DGNR, TIDD…DTKI, KLKT…EVNS, GNNS…NTDH, CGTT…SVNI, LGFT…DPNI, and EKET…LRAF.

The polypeptide is Putative ankyrin repeat protein FPV232 (Fowlpox virus (strain NVSL) (FPV)).